The chain runs to 237 residues: Apoptosis regulator OPG045 (237 aa).

This sequence belongs to the orthopoxvirus OPG045 family. Interacts with host BAK1, BAX and BID.

The protein resides in the host mitochondrion outer membrane. The protein localises to the host cytoplasm. Functionally, plays a role in the inhibition of host apoptosis. Interacts with host BAX and thereby inhibits its activity. This is Apoptosis regulator OPG045 (OPG045) from Homo sapiens (Human).